Reading from the N-terminus, the 129-residue chain is Small ribosomal subunit protein uS11 (129 aa).

It belongs to the universal ribosomal protein uS11 family. Part of the 30S ribosomal subunit. Interacts with proteins S7 and S18. Binds to IF-3.

Functionally, located on the platform of the 30S subunit, it bridges several disparate RNA helices of the 16S rRNA. Forms part of the Shine-Dalgarno cleft in the 70S ribosome. This is Small ribosomal subunit protein uS11 from Pasteurella multocida (strain Pm70).